Here is a 449-residue protein sequence, read N- to C-terminus: Exodeoxyribonuclease 7 large subunit (449 aa).

The protein belongs to the XseA family. Heterooligomer composed of large and small subunits.

It localises to the cytoplasm. It catalyses the reaction Exonucleolytic cleavage in either 5'- to 3'- or 3'- to 5'-direction to yield nucleoside 5'-phosphates.. Functionally, bidirectionally degrades single-stranded DNA into large acid-insoluble oligonucleotides, which are then degraded further into small acid-soluble oligonucleotides. The chain is Exodeoxyribonuclease 7 large subunit from Aliivibrio fischeri (strain MJ11) (Vibrio fischeri).